A 347-amino-acid polypeptide reads, in one-letter code: Trace amine-associated receptor 4 (347 aa).

At 1–37 the chain is on the extracellular side; sequence MNSPDLWYSPETQFCFAAANNSCPRKARPALVVCAMY. A glycan (N-linked (GlcNAc...) asparagine) is linked at asparagine 20. 2 cysteine pairs are disulfide-bonded: cysteine 23–cysteine 187 and cysteine 106–cysteine 191. A helical membrane pass occupies residues 38–58; that stretch reads LVMIGAIVMTMLGNMVVIISI. Residues 59-69 are Cytoplasmic-facing; that stretch reads AHFKQLHSPTN. The chain crosses the membrane as a helical span at residues 70-90; it reads FLILSMATTDFLLSCVVMPFS. The Extracellular portion of the chain corresponds to 91 to 110; that stretch reads MVRSIESCWYFGDLFCKVHS. The helical transmembrane segment at 111–129 threads the bilayer; the sequence is CCDIMLCTTSIFHLCFISV. Over 130–149 the chain is Cytoplasmic; sequence DRHYAVCDPLHYVTQITVGV. Residues 150–170 traverse the membrane as a helical segment; the sequence is VGVFLLISWSVPILFAFGLVF. At 171–197 the chain is on the extracellular side; sequence SELNLIGAEDFVAAIDCTGLCVLIFNK. The extracellular Loop 2 (ECL2) stretch occupies residues 175-188; sequence LIGAEDFVAAIDCT. The chain crosses the membrane as a helical span at residues 198-218; the sequence is LWGVLASFIAFFLPGAIMVGI. The Cytoplasmic portion of the chain corresponds to 219–260; it reads YIHIFTVARKHARKIGPGPRTKRALSESKMKATSGKESKATK. The chain crosses the membrane as a helical span at residues 261 to 281; sequence TLSIVMGVFVLCWLPFFVLTI. Over 282–296 the chain is Extracellular; it reads TDPFIGFTTPEDLYN. The chain crosses the membrane as a helical span at residues 297-317; that stretch reads VFLWLGYFNSTFNPIIYGMFY. At 318-347 the chain is on the cytoplasmic side; that stretch reads PWFRKALRMIVTGTIFRSDSSTSSLHPAHP.

This sequence belongs to the G-protein coupled receptor 1 family.

It is found in the cell membrane. Its function is as follows. Olfactory receptor specific for 2-phenylethylamine, a trace amine present at high concentration in the urine of carnivore species, playing a key role in fear and avoidance responses. 2-phenylethylamine acts as a kairomone in the chemical detection of carnivore odor and triggers fear in rats. This receptor is probably mediated by the G(s)-class of G-proteins which activate adenylate cyclase. This chain is Trace amine-associated receptor 4, found in Rattus norvegicus (Rat).